Reading from the N-terminus, the 441-residue chain is MLRFAPSPTGDMHIGNLRAAIFNYIIAKQQNQKFLIRIEDTDIARNIVDKDKEILNLLNLFGLLWDNLVYQSSNFERHRQLAQHLISKDLAFYCYCSKEFLESKRLEAKEQKKPFRYDPSWAEIEKSSNTKPVVRIRGASEAISFEDAIKGTLRFEAHEIDSFVILKEDGIPTYNFACAIDDMLYDISFIVRGEDHVSNTPRQILIHRALGYDKVLGYAHLPIILGESGSKMSKRDNASSVAWLLEEGFLPQAIMNYLISMGNHTPTEVFKLQDAYNWFDIKNIAKSPVKFDIKRLRFLNREHLKMLNEQEFALLLDSKDSSIGALGKLHLQEASTLNEIRSKIERIFSPKCIAQNEEGENFENECKILYDILHQMIESYDESLNDYDTFKNALMAKSSLKGKKFFKPLRILLTGQTQGLELSEIYPYLRFFLRDIVRLSK.

The 'HIGH' region signature appears at 6-16 (PSPTGDMHIGN). Residues 231-235 (KMSKR) carry the 'KMSKS' region motif. K234 lines the ATP pocket.

The protein belongs to the class-I aminoacyl-tRNA synthetase family. Glutamate--tRNA ligase type 1 subfamily. In terms of assembly, monomer.

It localises to the cytoplasm. It catalyses the reaction tRNA(Glu) + L-glutamate + ATP = L-glutamyl-tRNA(Glu) + AMP + diphosphate. Catalyzes the attachment of glutamate to tRNA(Glu) in a two-step reaction: glutamate is first activated by ATP to form Glu-AMP and then transferred to the acceptor end of tRNA(Glu). The sequence is that of Glutamate--tRNA ligase 2 from Helicobacter hepaticus (strain ATCC 51449 / 3B1).